The primary structure comprises 1262 residues: Collagen alpha-1(III) chain (1262 aa).

The N-terminal stretch at 1 to 23 (MMSFVQKVSLFILAVFQPSVILA) is a signal peptide. Residues 24–150 (QQDALGGCTH…PSISGGSFSP (127 aa)) constitute a propeptide, N-terminal propeptide. Residues 29–88 (GGCTHLGQEYADRDVWKPEPCQICVCDSGSVLCDDIICDDQELDCPNPEIPLGECCPVCP) enclose the VWFC domain. Disordered regions lie at residues 95-143 (TELP…CPSI) and 160-1000 (GSVG…GGVA). The span at 102-118 (GPKGDPGSPGSPGRTGA) shows a compositional bias: low complexity. The segment covering 119 to 134 (PGPPGQPGSPGAPGPP) has biased composition (pro residues). Residues 145-164 (GGSFSPQYDSYDVKAGSVGM) are nonhelical region (N-terminal). Residues 165 to 994 (GYPPQPISGF…PGPSGPPGPC (830 aa)) are triple-helical region. Positions 167 to 190 (PPQPISGFPGPPGPSGPPGPPGHA) are enriched in pro residues. The segment covering 192-201 (PPGSNGYQGP) has biased composition (low complexity). Over residues 202 to 216 (PGEPGQPGPSGPPGP) the composition is skewed to pro residues. A compositionally biased stretch (basic and acidic residues) spans 228-240 (KDGEPGRPGRNGD). Low complexity predominate over residues 253-264 (PGMPGMPGMKGA). Lys-262 bears the 5-hydroxylysine mark. Over residues 265–274 (RGFDGKDGAK) the composition is skewed to basic and acidic residues. Low complexity-rich tracts occupy residues 276–295 (DSGA…NGSP) and 339–376 (TAGF…QGQA). The residue at position 283 (Lys-283) is a 5-hydroxylysine. Gly residues predominate over residues 389-414 (GSPGGKGEMGPSGIPGGPGPPGGRGL). Composition is skewed to low complexity over residues 534-549 (MRGL…SDGK) and 631-640 (PGPSGSPGLQ). Residues 641–650 (GLPGGPGPAG) show a composition bias toward gly residues. Residues 672–684 (PKGENGIPGERGP) show a composition bias toward low complexity. Positions 692–701 (GARGGPGPAG) are enriched in gly residues. Composition is skewed to low complexity over residues 723 to 738 (LQGM…SPGP), 781 to 790 (TGPAGAPGPA), 802 to 817 (QGLP…PGQN), and 828 to 838 (PPGLRGEAGPP). Lys-859 is modified (5-hydroxylysine). Positions 863–872 (GSPGGPGAAG) are enriched in gly residues. A compositionally biased stretch (pro residues) spans 895–904 (PGVPGPPGHP). Positions 927–940 (PQGAIGSPGASGAR) are enriched in low complexity. Residues 976-993 (AGPPGQPGLPGPSGPPGP) are compositionally biased toward pro residues. A nonhelical region (C-terminal) region spans residues 995-1003 (CGGGVASLG). The propeptide at 1018-1262 (DEPKENEINL…GVDVGPVCFL (245 aa)) is C-terminal propeptide. The 235-residue stretch at 1028-1262 (GEIMSSMKSI…GVDVGPVCFL (235 aa)) folds into the Fibrillar collagen NC1 domain. Cystine bridges form between Cys-1058–Cys-1090, Cys-1098–Cys-1260, and Cys-1168–Cys-1213. Ca(2+) contacts are provided by Asp-1076, Asn-1078, Gln-1079, Cys-1081, and Asp-1084. An N-linked (GlcNAc...) asparagine glycan is attached at Asn-1163.

This sequence belongs to the fibrillar collagen family. In terms of assembly, trimers of identical alpha 1(III) chains. The chains are linked to each other by interchain disulfide bonds. Trimers are also cross-linked via hydroxylysines. Post-translationally, prolines at the third position of the tripeptide repeating unit (G-X-Y) are hydroxylated in some or all of the chains.

It localises to the secreted. The protein resides in the extracellular space. It is found in the extracellular matrix. Functionally, collagen type III occurs in most soft connective tissues along with type I collagen. The chain is Collagen alpha-1(III) chain (COL3A1) from Gallus gallus (Chicken).